The chain runs to 826 residues: Copper-transporting ATPase 1 (826 aa).

2 consecutive HMA domains span residues 15–80 (APTD…YEPK) and 82–147 (IIQE…YDVR). Cu cation-binding residues include C26, C29, C93, and C96. Helical transmembrane passes span 172-192 (LVILSAVLTLPLFLVEMGSHF), 209-229 (NLYIQFALATAVLFGPGLRFF), 246-266 (LVVLGTTAAWGYSVVATFASG), 270-290 (SGTANVYYEAAAVIVTLILLG), 429-449 (AWFVPAVILVAVLTFAAWYVF), and 457-477 (FALVNAVAVLIIACPCAMGLA). The active-site 4-aspartylphosphate intermediate is the D514. The Mg(2+) site is built by D713 and D717. 2 helical membrane passes run 772–792 (FWAFAYNVSLVPVAAGVLYPL) and 795–815 (TLLSPILAAAAMAMSSVFVLG).

Belongs to the cation transport ATPase (P-type) (TC 3.A.3) family. Type IB subfamily.

The protein localises to the cell membrane. It catalyses the reaction Cu(2+)(in) + ATP + H2O = Cu(2+)(out) + ADP + phosphate + H(+). In terms of biological role, involved in copper transport. In Rhizobium meliloti (strain 1021) (Ensifer meliloti), this protein is Copper-transporting ATPase 1 (actP1).